The following is a 206-amino-acid chain: uncharacterized protein (206 aa).

The segment at 128 to 206 is disordered; it reads KRYNVQKPKV…DQSWLDELLR (79 aa). Residues 171-181 are compositionally biased toward polar residues; sequence YISSNHSSMHI.

The protein localises to the cytoplasm. Its subcellular location is the nucleus. This is an uncharacterized protein from Schizosaccharomyces pombe (strain 972 / ATCC 24843) (Fission yeast).